We begin with the raw amino-acid sequence, 496 residues long: FAD-linked oxidoreductase AFUA_1G00980 (496 aa).

Residues 1–21 form the signal peptide; sequence MRRATLIPLAIWVAGAAAAAA. N-linked (GlcNAc...) asparagine glycans are attached at residues asparagine 49, asparagine 122, asparagine 205, asparagine 258, asparagine 344, asparagine 351, asparagine 371, and asparagine 382. In terms of domain architecture, FAD-binding PCMH-type spans 64-243; the sequence is MAPTYAVSVR…VEAVYQVTDL (180 aa).

The protein belongs to the oxygen-dependent FAD-linked oxidoreductase family. FAD serves as cofactor.

FAD-linked oxidoreductase; part of the gene cluster that mediates the biosynthesis of fumigermin that inhibits germination of spores of the inducing S.rapamycinicus, and thus helps the fungus to defend resources in the shared habitat against a bacterial competitor. The partially reducing polyketide synthase fngA alone is sufficient for the production of fumigermin. FgnA catalyzes the condensation of 3 malonyl-CoA units to an acetyl-CoA starter, and 3 methylations to yield fumigermin. It is remarkable that the five cluster genes including fgnA are conserved in distantly related fungi, supporting the assumption of a fumigermin cluster; it is thus possible that originally all five genes were functional, but that the genes encoding tailoring enzymes became inactive from mutations, similar to the case of the fgnA gene in strains A1163 and Af293. In Aspergillus fumigatus (strain ATCC MYA-4609 / CBS 101355 / FGSC A1100 / Af293) (Neosartorya fumigata), this protein is FAD-linked oxidoreductase AFUA_1G00980.